The following is a 246-amino-acid chain: Sensory transduction protein LytT (246 aa).

In terms of domain architecture, Response regulatory spans 4 to 120; sequence HIMIAEDERL…RFKIAMNRIR (117 aa). Aspartate 55 is subject to 4-aspartylphosphate. One can recognise an HTH LytTR-type domain in the interval 136 to 243; that stretch reads LVVNLDEKMM…AKGLFDALQG (108 aa).

Post-translationally, phosphorylated by LytS.

It localises to the cytoplasm. Functionally, member of the two-component regulatory system LytS/LytT that probably regulates genes involved in cell wall metabolism. The protein is Sensory transduction protein LytT (lytT) of Oceanobacillus iheyensis (strain DSM 14371 / CIP 107618 / JCM 11309 / KCTC 3954 / HTE831).